The primary structure comprises 96 residues: Neutrophil defensin 8 (96 aa).

The N-terminal stretch at 1-19 (MRTLVILAAILLVALQAQA) is a signal peptide. A propeptide spanning residues 20–66 (EPLQARTDEATAAQEQIPTDNPEVVVSLAWDESLAPKDSVPGLRKNM) is cleaved from the precursor. 3 cysteine pairs are disulfide-bonded: Cys68–Cys96, Cys70–Cys85, and Cys75–Cys95.

Belongs to the alpha-defensin family.

It localises to the secreted. Functionally, probable antibiotic and antifungal activity. The protein is Neutrophil defensin 8 of Macaca mulatta (Rhesus macaque).